The chain runs to 103 residues: MAALSLSVSTVKPLSDRVFVKVNASEEKTAGGLYLPDTAKEKPQVGEVVALGPGKRNEDGSRQELEIKVGDKVLYSKYAGTDIKLGTEEYVLLSEKDILAVVI.

The protein belongs to the GroES chaperonin family. In terms of assembly, heptamer of 7 subunits arranged in a ring. Interacts with the chaperonin GroEL.

Its subcellular location is the cytoplasm. Together with the chaperonin GroEL, plays an essential role in assisting protein folding. The GroEL-GroES system forms a nano-cage that allows encapsulation of the non-native substrate proteins and provides a physical environment optimized to promote and accelerate protein folding. GroES binds to the apical surface of the GroEL ring, thereby capping the opening of the GroEL channel. The sequence is that of Co-chaperonin GroES from Nostoc punctiforme (strain ATCC 29133 / PCC 73102).